We begin with the raw amino-acid sequence, 313 residues long: Porphobilinogen deaminase (313 aa).

Cysteine 242 is subject to S-(dipyrrolylmethanemethyl)cysteine.

This sequence belongs to the HMBS family. In terms of assembly, monomer. Dipyrromethane serves as cofactor.

The enzyme catalyses 4 porphobilinogen + H2O = hydroxymethylbilane + 4 NH4(+). It functions in the pathway porphyrin-containing compound metabolism; protoporphyrin-IX biosynthesis; coproporphyrinogen-III from 5-aminolevulinate: step 2/4. Functionally, tetrapolymerization of the monopyrrole PBG into the hydroxymethylbilane pre-uroporphyrinogen in several discrete steps. The protein is Porphobilinogen deaminase of Pseudomonas syringae pv. tomato (strain ATCC BAA-871 / DC3000).